Reading from the N-terminus, the 509-residue chain is Protein MAIN-LIKE 1 (509 aa).

The interval 477–509 (GYGKRRRRNEHTPTPNNGGGNDISSLLLQKEDS) is disordered. Over residues 488–503 (TPTPNNGGGNDISSLL) the composition is skewed to polar residues.

As to expression, expressed in root tips, the shoot apical meristem (SAM), leaves, mature flowers and embryos.

The protein resides in the nucleus. Its function is as follows. Acts as an important factor for cell fate determination and maintenance throughout plant development. Required for the organization of the root apical meristem (RAM) and the shoot apical meristem (SAM). Required to maintain genome stability and cell division activity in meristematic cells. This is Protein MAIN-LIKE 1 from Arabidopsis thaliana (Mouse-ear cress).